Reading from the N-terminus, the 37-residue chain is Ferredoxin--NADP reductase, chloroplastic (37 aa).

Residues S3 and 24–25 (SR) each bind NADP(+).

It belongs to the ferredoxin--NADP reductase type 1 family. Requires FAD as cofactor.

It is found in the plastid. The protein resides in the chloroplast stroma. The protein localises to the chloroplast thylakoid membrane. It carries out the reaction 2 reduced [2Fe-2S]-[ferredoxin] + NADP(+) + H(+) = 2 oxidized [2Fe-2S]-[ferredoxin] + NADPH. It participates in energy metabolism; photosynthesis. Its function is as follows. May play a key role in regulating the relative amounts of cyclic and non-cyclic electron flow to meet the demands of the plant for ATP and reducing power. The chain is Ferredoxin--NADP reductase, chloroplastic from Imperata cylindrica (Cogon grass).